The following is a 199-amino-acid chain: MSNLENLTSKIIEDANKEAEKLLSEAKKEENEIVDEKVKKANKAKEQIIEKTKREAKTKAERVISNTHLKVRNNKLEAKQEMINKVFDEAVIKLQNLPQEEYLNFIKNSILSLDIEGDEEIIVSPNDKNKIDISFILTLNNKLKAKGKKDLLKISNENRNIKGGFILYKNGIEINNSFEALVDSLRDELEQEIIEALFS.

This sequence belongs to the V-ATPase E subunit family.

Functionally, produces ATP from ADP in the presence of a proton gradient across the membrane. The chain is V-type proton ATPase subunit E from Clostridium botulinum (strain Okra / Type B1).